A 478-amino-acid chain; its full sequence is Proline--tRNA ligase (478 aa).

This sequence belongs to the class-II aminoacyl-tRNA synthetase family. ProS type 3 subfamily. In terms of assembly, homodimer.

It is found in the cytoplasm. It carries out the reaction tRNA(Pro) + L-proline + ATP = L-prolyl-tRNA(Pro) + AMP + diphosphate. Catalyzes the attachment of proline to tRNA(Pro) in a two-step reaction: proline is first activated by ATP to form Pro-AMP and then transferred to the acceptor end of tRNA(Pro). This chain is Proline--tRNA ligase, found in Methanoregula boonei (strain DSM 21154 / JCM 14090 / 6A8).